The chain runs to 132 residues: Interleukin-13 (132 aa).

The signal sequence occupies residues 1–18 (MALLLTAVIVLICFGGLT). 4 N-linked (GlcNAc...) asparagine glycosylation sites follow: Asn-38, Asn-49, Asn-57, and Asn-75. Intrachain disulfides connect Cys-48–Cys-76 and Cys-64–Cys-90.

It belongs to the IL-4/IL-13 family. As to quaternary structure, interacts with IL13RA2.

The protein resides in the secreted. Functionally, cytokine that plays important roles in allergic inflammation and immune response to parasite infection. Synergizes with IL2 in regulating interferon-gamma synthesis. Stimulates B-cell proliferation, and activation of eosinophils, basophils, and mast cells. Plays an important role in controlling IL33 activity by modulating the production of transmembrane and soluble forms of interleukin-1 receptor-like 1/IL1RL1. Displays the capacity to antagonize Th1-driven proinflammatory immune response and downregulates synthesis of many proinflammatory cytokines including IL1, IL6, IL10, IL12 and TNF-alpha through a mechanism that partially involves suppression of NF-kappa-B. Also functions on nonhematopoietic cells, including endothelial cells where it induces vascular cell adhesion protein 1/VCAM1, which is important in the recruitment of eosinophils. Exerts its biological effects through its receptors which comprises the IL4R chain and the IL13RA1 chain, to activate JAK1 and TYK2, leading to the activation of STAT6. Aside from IL13RA1, another receptor IL13RA2 acts as a high affinity decoy for IL13 and mediates internalization and depletion of extracellular IL13. The polypeptide is Interleukin-13 (IL13) (Bos taurus (Bovine)).